Consider the following 506-residue polypeptide: Histidine ammonia-lyase (506 aa).

The 5-imidazolinone (Ala-Gly) cross-link spans A142–G144. Residue S143 is modified to 2,3-didehydroalanine (Ser).

The protein belongs to the PAL/histidase family. Contains an active site 4-methylidene-imidazol-5-one (MIO), which is formed autocatalytically by cyclization and dehydration of residues Ala-Ser-Gly.

It is found in the cytoplasm. It catalyses the reaction L-histidine = trans-urocanate + NH4(+). It participates in amino-acid degradation; L-histidine degradation into L-glutamate; N-formimidoyl-L-glutamate from L-histidine: step 1/3. This is Histidine ammonia-lyase from Bacillus cereus (strain B4264).